Reading from the N-terminus, the 902-residue chain is Mitochondrial aspartate-glutamate transporter AGC1 (902 aa).

Solcar repeat units follow at residues 528–614, 622–710, and 725–813; these read FDSL…MRNR, LSLF…LKKD, and LKTW…FKGF. The next 6 membrane-spanning stretches (helical) occupy residues 534–554, 591–611, 622–642, 681–702, 731–751, and 786–806; these read FSLG…IDFI, GPQL…NDFM, LSLF…VIFT, GLYN…IYFP, LTAG…FDVI, and FKGG…TLAA.

The protein belongs to the mitochondrial carrier (TC 2.A.29) family.

Its subcellular location is the mitochondrion inner membrane. Its function is as follows. Calcium-dependent mitochondrial aspartate and glutamate carrier. Transport of glutamate in mitochondria is required for mitochondrial transamination reactions and ornithine synthesis. Plays also a role in malate-aspartate NADH shuttle, which is critical for growth on acetate and fatty acids. The chain is Mitochondrial aspartate-glutamate transporter AGC1 (AGC1) from Saccharomyces cerevisiae (strain ATCC 204508 / S288c) (Baker's yeast).